We begin with the raw amino-acid sequence, 432 residues long: Adenylosuccinate synthetase (432 aa).

GTP is bound by residues 13-19 (GDEGKGK) and 41-43 (GHT). Asp14 (proton acceptor) is an active-site residue. Mg(2+)-binding residues include Asp14 and Gly41. Residues 14–17 (DEGK), 39–42 (NAGH), Thr130, Arg144, Gln225, Thr240, and Arg304 each bind IMP. The active-site Proton donor is His42. 300-306 (STTGRRR) serves as a coordination point for substrate. Residues Arg306, 332–334 (KID), and 415–417 (STG) each bind GTP.

The protein belongs to the adenylosuccinate synthetase family. In terms of assembly, homodimer. The cofactor is Mg(2+).

Its subcellular location is the cytoplasm. It carries out the reaction IMP + L-aspartate + GTP = N(6)-(1,2-dicarboxyethyl)-AMP + GDP + phosphate + 2 H(+). Its pathway is purine metabolism; AMP biosynthesis via de novo pathway; AMP from IMP: step 1/2. Its function is as follows. Plays an important role in the de novo pathway of purine nucleotide biosynthesis. Catalyzes the first committed step in the biosynthesis of AMP from IMP. This chain is Adenylosuccinate synthetase, found in Blochmanniella pennsylvanica (strain BPEN).